The chain runs to 201 residues: Large ribosomal subunit protein uL4 (201 aa).

A disordered region spans residues R39–R72. Residues T42–K53 show a composition bias toward polar residues.

This sequence belongs to the universal ribosomal protein uL4 family. In terms of assembly, part of the 50S ribosomal subunit.

Its function is as follows. One of the primary rRNA binding proteins, this protein initially binds near the 5'-end of the 23S rRNA. It is important during the early stages of 50S assembly. It makes multiple contacts with different domains of the 23S rRNA in the assembled 50S subunit and ribosome. Functionally, forms part of the polypeptide exit tunnel. This chain is Large ribosomal subunit protein uL4, found in Deinococcus deserti (strain DSM 17065 / CIP 109153 / LMG 22923 / VCD115).